The chain runs to 835 residues: Leucine--tRNA ligase (835 aa).

The 'HIGH' region motif lies at Pro-36–His-46. The short motif at Lys-602–Ser-606 is the 'KMSKS' region element. Lys-605 provides a ligand contact to ATP.

This sequence belongs to the class-I aminoacyl-tRNA synthetase family.

It is found in the cytoplasm. The catalysed reaction is tRNA(Leu) + L-leucine + ATP = L-leucyl-tRNA(Leu) + AMP + diphosphate. The protein is Leucine--tRNA ligase of Rickettsia rickettsii (strain Iowa).